The following is a 370-amino-acid chain: Glycerophosphodiester phosphodiesterase GDPD3 (370 aa).

The GP-PDE domain occupies Phe35–Ile322.

This sequence belongs to the glycerophosphoryl diester phosphodiesterase family. Expressed in flowers and siliques.

The catalysed reaction is a sn-glycero-3-phosphodiester + H2O = an alcohol + sn-glycerol 3-phosphate + H(+). The polypeptide is Glycerophosphodiester phosphodiesterase GDPD3 (Arabidopsis thaliana (Mouse-ear cress)).